Here is a 321-residue protein sequence, read N- to C-terminus: Anthranilate phosphoribosyltransferase (321 aa).

5-phospho-alpha-D-ribose 1-diphosphate contacts are provided by residues Gly-72, 75-76, Thr-80, 82-85, 99-107, and Ser-111; these read GD, NVST, and KHGNVSVTS. Gly-72 lines the anthranilate pocket. Ser-84 contacts Mg(2+). Asn-102 contributes to the anthranilate binding site. Arg-157 is a binding site for anthranilate. Asp-216 and Glu-217 together coordinate Mg(2+).

Belongs to the anthranilate phosphoribosyltransferase family. In terms of assembly, homodimer. Mg(2+) serves as cofactor.

It carries out the reaction N-(5-phospho-beta-D-ribosyl)anthranilate + diphosphate = 5-phospho-alpha-D-ribose 1-diphosphate + anthranilate. It participates in amino-acid biosynthesis; L-tryptophan biosynthesis; L-tryptophan from chorismate: step 2/5. Catalyzes the transfer of the phosphoribosyl group of 5-phosphorylribose-1-pyrophosphate (PRPP) to anthranilate to yield N-(5'-phosphoribosyl)-anthranilate (PRA). This chain is Anthranilate phosphoribosyltransferase, found in Methanococcus vannielii (strain ATCC 35089 / DSM 1224 / JCM 13029 / OCM 148 / SB).